A 37-amino-acid chain; its full sequence is Omega-sparatoxin-Hv1a (37 aa).

3 disulfide bridges follow: cysteine 4–cysteine 18, cysteine 11–cysteine 23, and cysteine 17–cysteine 33.

In terms of tissue distribution, expressed by the venom gland.

It localises to the secreted. Its function is as follows. Blocks calcium channels (Cav). The sequence is that of Omega-sparatoxin-Hv1a from Heteropoda venatoria (Brown huntsman spider).